The sequence spans 74 residues: Transcription attenuation protein MtrB (74 aa).

The protein belongs to the MtrB family. In terms of assembly, oligomer of 11 identical subunits arranged in doughnut-like structure.

Functionally, required for transcription attenuation control in the Trp operon. This trans-acting factor seems to recognize a 10 bases nucleotide sequence in the Trp leader transcript causing transcription termination. Binds the leader RNA only in presence of L-tryptophan. This is Transcription attenuation protein MtrB (mtrB) from Oceanobacillus iheyensis (strain DSM 14371 / CIP 107618 / JCM 11309 / KCTC 3954 / HTE831).